The following is a 454-amino-acid chain: F-box/WD repeat-containing protein 2 (454 aa).

The F-box domain maps to Arg54–Ala101. WD repeat units follow at residues Gly146–Gly183, Gln185–His221, Gly224–Thr265, and Leu276–Cys314. N6-acetyllysine is present on Lys298.

As to quaternary structure, directly interacts with SKP1 and CUL1.

In terms of biological role, substrate-recognition component of the SCF (SKP1-CUL1-F-box protein)-type E3 ubiquitin ligase complex. This is F-box/WD repeat-containing protein 2 from Rattus norvegicus (Rat).